Reading from the N-terminus, the 145-residue chain is Ribonuclease H (145 aa).

The RNase H type-1 domain maps to 1-142; the sequence is MDTPVYLYTD…ADDLANRGAA (142 aa). D10, E48, D70, and D134 together coordinate Mg(2+).

Belongs to the RNase H family. Monomer. Requires Mg(2+) as cofactor.

It is found in the cytoplasm. It catalyses the reaction Endonucleolytic cleavage to 5'-phosphomonoester.. Endonuclease that specifically degrades the RNA of RNA-DNA hybrids. This Neisseria meningitidis serogroup C / serotype 2a (strain ATCC 700532 / DSM 15464 / FAM18) protein is Ribonuclease H.